We begin with the raw amino-acid sequence, 161 residues long: MKHLPKHLRPRWRYLAVGLESWPDADIDRRAFQRELWFAAQNLIGDAGSAALDGSVLHFRFEDGDGEAVIRARRGEVDALRAVLATLSTVDGHPLGVVVRGVSGTVRACEEKYIRGPQEGTEERTVAFAGADRPAVVRNDRVTVELSGGPVGATALDIRDN.

The protein belongs to the eukaryotic/archaeal RNase P protein component 2 family. Consists of a catalytic RNA component and at least 4-5 protein subunits.

The protein localises to the cytoplasm. It catalyses the reaction Endonucleolytic cleavage of RNA, removing 5'-extranucleotides from tRNA precursor.. Functionally, part of ribonuclease P, a protein complex that generates mature tRNA molecules by cleaving their 5'-ends. The chain is Ribonuclease P protein component 2 from Natronomonas pharaonis (strain ATCC 35678 / DSM 2160 / CIP 103997 / JCM 8858 / NBRC 14720 / NCIMB 2260 / Gabara) (Halobacterium pharaonis).